Consider the following 83-residue polypeptide: MKQGIHPDYREVVFQDSSTGFQFLSGSTATSDETVEWEDGNTYPLIRVEITSDSHPFYTGKQKFTQADGAVDRFNKKYGLSND.

This sequence belongs to the bacterial ribosomal protein bL31 family. Type B subfamily. In terms of assembly, part of the 50S ribosomal subunit.

The polypeptide is Large ribosomal subunit protein bL31B (Levilactobacillus brevis (strain ATCC 367 / BCRC 12310 / CIP 105137 / JCM 1170 / LMG 11437 / NCIMB 947 / NCTC 947) (Lactobacillus brevis)).